The primary structure comprises 367 residues: Riboflavin biosynthesis protein VVA0006 (367 aa).

215–219 (RLHSE) lines the GTP pocket. Zn(2+) contacts are provided by Cys-220, Cys-231, and Cys-233. Residues Gln-236, 258–260 (EGR), and Thr-280 contribute to the GTP site. Asp-292 acts as the Proton acceptor in catalysis. Arg-294 acts as the Nucleophile in catalysis. 2 residues coordinate GTP: Thr-315 and Lys-320.

The protein in the N-terminal section; belongs to the YbiA family. In the C-terminal section; belongs to the GTP cyclohydrolase II family. Zn(2+) serves as cofactor.

It catalyses the reaction 2,5-diamino-6-hydroxy-4-(5-phosphoribosylamino)-pyrimidine + H2O = 2,5,6-triamino-4-hydroxypyrimidine + D-ribose 5-phosphate. It carries out the reaction 5-amino-6-(5-phospho-D-ribosylamino)uracil + H2O = 5,6-diaminouracil + D-ribose 5-phosphate. The catalysed reaction is GTP + 4 H2O = 2,5-diamino-6-hydroxy-4-(5-phosphoribosylamino)-pyrimidine + formate + 2 phosphate + 3 H(+). It participates in cofactor biosynthesis; riboflavin biosynthesis; 5-amino-6-(D-ribitylamino)uracil from GTP: step 1/4. Its function is as follows. Catalyzes the hydrolysis of the N-glycosidic bond in the first two intermediates of riboflavin biosynthesis, which are highly reactive metabolites, yielding relatively innocuous products. Thus, can divert a surplus of harmful intermediates into relatively harmless products and pre-empt the damage these intermediates would otherwise do. Has no activity against GTP, nucleoside monophosphates or ADP-ribose. Catalyzes the conversion of GTP to 2,5-diamino-6-ribosylamino-4(3H)-pyrimidinone 5'-phosphate (DARP), formate and pyrophosphate. In Vibrio vulnificus (strain YJ016), this protein is Riboflavin biosynthesis protein VVA0006.